A 388-amino-acid chain; its full sequence is Pepsin A-1 (388 aa).

Positions 1-15 are cleaved as a signal peptide; it reads MKWLLLLGLVALSEC. 2 propeptides (activation peptide) span residues 16 to 40 and 41 to 62; these read IIYKVPLVRKKSLRRNLSEHGLLKD and FLKKHNLNPASKYFPQAEAPTL. The 310-residue stretch at 76 to 385 folds into the Peptidase A1 domain; sequence YFGTIGIGTP…DRANNQVGLA (310 aa). Asp94 is a catalytic residue. The cysteines at positions 107 and 112 are disulfide-linked. At Ser130 the chain carries Phosphoserine. A disulfide bridge connects residues Cys268 and Cys272. The active site involves Asp277. An intrachain disulfide couples Cys311 to Cys344.

It belongs to the peptidase A1 family. Post-translationally, each pepsinogen is converted to corresponding pepsin at pH 2.0 in part as a result of the release of a 47 AA activation segment and in part as a result of stepwise proteolytic cleavage via an intermediate form(s).

The protein localises to the secreted. The enzyme catalyses Preferential cleavage: hydrophobic, preferably aromatic, residues in P1 and P1' positions. Cleaves 1-Phe-|-Val-2, 4-Gln-|-His-5, 13-Glu-|-Ala-14, 14-Ala-|-Leu-15, 15-Leu-|-Tyr-16, 16-Tyr-|-Leu-17, 23-Gly-|-Phe-24, 24-Phe-|-Phe-25 and 25-Phe-|-Tyr-26 bonds in the B chain of insulin.. In terms of biological role, shows particularly broad specificity; although bonds involving phenylalanine and leucine are preferred, many others are also cleaved to some extent. This is Pepsin A-1 (PGA) from Macaca fuscata fuscata (Japanese macaque).